The primary structure comprises 710 residues: Polyribonucleotide nucleotidyltransferase (710 aa).

Positions 489 and 495 each coordinate Mg(2+). The KH domain maps to P556–I615. An S1 motif domain is found at G625–K693. The tract at residues S691–D710 is disordered. Residues P700–D710 show a composition bias toward basic and acidic residues.

Requires Mg(2+) as cofactor.

It localises to the cytoplasm. The catalysed reaction is RNA(n+1) + phosphate = RNA(n) + a ribonucleoside 5'-diphosphate. Its function is as follows. Involved in mRNA degradation. Catalyzes the phosphorolysis of single-stranded polyribonucleotides processively in the 3'- to 5'-direction. This chain is Polyribonucleotide nucleotidyltransferase, found in Streptococcus pyogenes serotype M6 (strain ATCC BAA-946 / MGAS10394).